The following is a 239-amino-acid chain: MEPGLQQAGSCGAPSPDPAMQVQPGSVASPWRSTRPWRSTSRSYFYLSTTALVCLVVAVAIILVLVVQKKDSTPNTTEKAPLKGGNCSEDLFCTLKSTPSKKSWAYLQVSKHLNNTKLSWNEDGTIHGLIYQDGNLIVQFPGLYFIVCQLQFLVQCSNHSVDLTLQLLINSKIKKQTLVTVCESGVQSKNIYQNLSQFLLHYLQVNSTISVRVDNFQYVDTNTFPLDNVLSVFLYSSSD.

A disordered region spans residues 1–36 (MEPGLQQAGSCGAPSPDPAMQVQPGSVASPWRSTRP). Residues 1–43 (MEPGLQQAGSCGAPSPDPAMQVQPGSVASPWRSTRPWRSTSRS) are Cytoplasmic-facing. The chain crosses the membrane as a helical; Signal-anchor for type II membrane protein span at residues 44 to 67 (YFYLSTTALVCLVVAVAIILVLVV). Residues 68–239 (QKKDSTPNTT…LSVFLYSSSD (172 aa)) are Extracellular-facing. Residues asparagine 75, asparagine 86, asparagine 114, asparagine 158, asparagine 194, and asparagine 206 are each glycosylated (N-linked (GlcNAc...) asparagine). One can recognise a THD domain in the interval 103-230 (SWAYLQVSKH…TNTFPLDNVL (128 aa)). Cysteine 156 and cysteine 182 are oxidised to a cystine.

This sequence belongs to the tumor necrosis factor family. Homotrimer.

Its subcellular location is the membrane. Its function is as follows. Cytokine that binds to TNFRSF8/CD30. Induces proliferation of T-cells. This is Tumor necrosis factor ligand superfamily member 8 (Tnfsf8) from Mus musculus (Mouse).